The sequence spans 61 residues: Small ribosomal subunit protein uS14 (61 aa).

Positions 24, 27, 40, and 43 each coordinate Zn(2+).

It belongs to the universal ribosomal protein uS14 family. Zinc-binding uS14 subfamily. As to quaternary structure, part of the 30S ribosomal subunit. Contacts proteins S3 and S10. The cofactor is Zn(2+).

Functionally, binds 16S rRNA, required for the assembly of 30S particles and may also be responsible for determining the conformation of the 16S rRNA at the A site. The sequence is that of Small ribosomal subunit protein uS14 from Mycobacterium leprae (strain Br4923).